The chain runs to 483 residues: Betaine aldehyde dehydrogenase (483 aa).

K(+) is bound by residues isoleucine 27 and aspartate 93. Residue 149–151 (GAW) participates in NAD(+) binding. Lysine 161 acts as the Charge relay system in catalysis. Residue 175 to 178 (KPSE) participates in NAD(+) binding. Valine 179 is a K(+) binding site. NAD(+) is bound at residue 228–231 (SVPT). Valine 243 contacts K(+). Glutamate 249 (proton acceptor) is an active-site residue. Positions 251, 283, and 380 each coordinate NAD(+). Cysteine 283 functions as the Nucleophile in the catalytic mechanism. At cysteine 283 the chain carries Cysteine sulfenic acid (-SOH). Residues lysine 450 and glycine 453 each coordinate K(+). Glutamate 457 functions as the Charge relay system in the catalytic mechanism.

The protein belongs to the aldehyde dehydrogenase family. In terms of assembly, dimer of dimers. The cofactor is K(+).

The enzyme catalyses betaine aldehyde + NAD(+) + H2O = glycine betaine + NADH + 2 H(+). It functions in the pathway amine and polyamine biosynthesis; betaine biosynthesis via choline pathway; betaine from betaine aldehyde: step 1/1. Functionally, involved in the biosynthesis of the osmoprotectant glycine betaine. Catalyzes the irreversible oxidation of betaine aldehyde to the corresponding acid. The sequence is that of Betaine aldehyde dehydrogenase from Cereibacter sphaeroides (strain ATCC 17023 / DSM 158 / JCM 6121 / CCUG 31486 / LMG 2827 / NBRC 12203 / NCIMB 8253 / ATH 2.4.1.) (Rhodobacter sphaeroides).